Reading from the N-terminus, the 246-residue chain is 1-(5-phosphoribosyl)-5-[(5-phosphoribosylamino)methylideneamino] imidazole-4-carboxamide isomerase (246 aa).

D8 acts as the Proton acceptor in catalysis. The active-site Proton donor is D131.

This sequence belongs to the HisA/HisF family.

It is found in the cytoplasm. The enzyme catalyses 1-(5-phospho-beta-D-ribosyl)-5-[(5-phospho-beta-D-ribosylamino)methylideneamino]imidazole-4-carboxamide = 5-[(5-phospho-1-deoxy-D-ribulos-1-ylimino)methylamino]-1-(5-phospho-beta-D-ribosyl)imidazole-4-carboxamide. Its pathway is amino-acid biosynthesis; L-histidine biosynthesis; L-histidine from 5-phospho-alpha-D-ribose 1-diphosphate: step 4/9. The chain is 1-(5-phosphoribosyl)-5-[(5-phosphoribosylamino)methylideneamino] imidazole-4-carboxamide isomerase from Albidiferax ferrireducens (strain ATCC BAA-621 / DSM 15236 / T118) (Rhodoferax ferrireducens).